Here is a 217-residue protein sequence, read N- to C-terminus: MOB kinase activator-like 2 (217 aa).

A disordered region spans residues 15–38; the sequence is GKESIRGNYKPKKHPRGSSRHTMR. The segment covering 23 to 38 has biased composition (basic residues); sequence YKPKKHPRGSSRHTMR. Positions 89, 94, 167, and 172 each coordinate Zn(2+).

The protein belongs to the MOB1/phocein family.

The polypeptide is MOB kinase activator-like 2 (mob2) (Dictyostelium discoideum (Social amoeba)).